The primary structure comprises 310 residues: Malate dehydrogenase (310 aa).

NAD(+)-binding positions include 7–12 and Asp-32; that span reads GAGNVG. Residues Arg-81 and Arg-87 each contribute to the substrate site. Residues Asn-94 and 117–119 each bind NAD(+); that span reads VSN. Positions 119 and 150 each coordinate substrate. Catalysis depends on His-174, which acts as the Proton acceptor.

This sequence belongs to the LDH/MDH superfamily. MDH type 3 family.

The enzyme catalyses (S)-malate + NAD(+) = oxaloacetate + NADH + H(+). Catalyzes the reversible oxidation of malate to oxaloacetate. This chain is Malate dehydrogenase, found in Chlorobium luteolum (strain DSM 273 / BCRC 81028 / 2530) (Pelodictyon luteolum).